Consider the following 176-residue polypeptide: Ribosome maturation factor RimM (176 aa).

The region spanning 99–173 is the PRC barrel domain; it reads ADEYYWHDLL…TMTITPLEGL (75 aa).

This sequence belongs to the RimM family. In terms of assembly, binds ribosomal protein uS19.

It is found in the cytoplasm. In terms of biological role, an accessory protein needed during the final step in the assembly of 30S ribosomal subunit, possibly for assembly of the head region. Essential for efficient processing of 16S rRNA. May be needed both before and after RbfA during the maturation of 16S rRNA. It has affinity for free ribosomal 30S subunits but not for 70S ribosomes. The sequence is that of Ribosome maturation factor RimM from Trichlorobacter lovleyi (strain ATCC BAA-1151 / DSM 17278 / SZ) (Geobacter lovleyi).